Here is a 256-residue protein sequence, read N- to C-terminus: Protein Ta0487 (256 aa).

It belongs to the CinA family.

The chain is Protein Ta0487 from Thermoplasma acidophilum (strain ATCC 25905 / DSM 1728 / JCM 9062 / NBRC 15155 / AMRC-C165).